We begin with the raw amino-acid sequence, 122 residues long: Large ribosomal subunit protein uL14 (122 aa).

It belongs to the universal ribosomal protein uL14 family. As to quaternary structure, part of the 50S ribosomal subunit. Forms a cluster with proteins L3 and L19. In the 70S ribosome, L14 and L19 interact and together make contacts with the 16S rRNA in bridges B5 and B8.

In terms of biological role, binds to 23S rRNA. Forms part of two intersubunit bridges in the 70S ribosome. The polypeptide is Large ribosomal subunit protein uL14 (Buchnera aphidicola subsp. Acyrthosiphon pisum (strain 5A)).